The sequence spans 119 residues: Small polypeptide DEVIL 24 (119 aa).

The interval S83–T114 is required for DVL/RTFL small polypeptide activity. A helical membrane pass occupies residues H96–Y113.

This sequence belongs to the DVL/RTFL small polypeptides family.

The protein localises to the cell membrane. Its function is as follows. Small polypeptide acting as a regulatory molecule which coordinates cellular responses required for differentiation, growth and development, probably by restricting polar cell proliferation in lateral organs and coordinating socket cell recruitment and differentiation at trichome sites. This is Small polypeptide DEVIL 24 from Arabidopsis thaliana (Mouse-ear cress).